The chain runs to 468 residues: Glucose transport protein (468 aa).

The Cytoplasmic portion of the chain corresponds to 1–17; that stretch reads MNPSSSPSQSTANVKFV. Residues 18 to 38 form a helical membrane-spanning segment; it reads LLISGVAALGGFLFGFDTAVI. Residues 39–58 lie on the Extracellular side of the membrane; it reads NGAVAALQKHFQTDSLLTGL. Residues 59–78 traverse the membrane as a helical segment; sequence SVSLALLGSALGAFGAGPIA. Residues 79–84 lie on the Cytoplasmic side of the membrane; it reads DRHGRI. The chain crosses the membrane as a helical span at residues 85-105; sequence KTMILAAVLFTLSSIGSGLPF. Topologically, residues 106 to 114 are extracellular; that stretch reads TIWDFIFWR. Residues 115–135 traverse the membrane as a helical segment; that stretch reads VLGGIGVGAASVIAPAYIAEV. The Cytoplasmic portion of the chain corresponds to 136 to 149; the sequence is SPAHLRGRLGSLQQ. The chain crosses the membrane as a helical span at residues 150 to 170; that stretch reads LAIVSGIFIALLSNWFIALMA. At 171–186 the chain is on the extracellular side; sequence GGSAQNPWLFGAAAWR. Residues 187–207 form a helical membrane-spanning segment; the sequence is WMFWTELIPALLYGVCAFLIP. The Cytoplasmic portion of the chain corresponds to 208-265; sequence ESPRYLVAQGQGEKAAAILWKVEGGDVPSRIEEIQATVSLDHKPRFSDLLSRRGGLLP. A helical membrane pass occupies residues 266–286; sequence IVWIGMGLSALQQFVGINVIF. Residues 287 to 307 are Extracellular-facing; it reads YYSSVLWRSVGFTEEKSLLIT. The helical transmembrane segment at 308–328 threads the bilayer; that stretch reads VITGFINILTTLVAIAFVDKF. Topologically, residues 329–331 are cytoplasmic; that stretch reads GRK. The chain crosses the membrane as a helical span at residues 332-352; sequence PLLLMGSIGMTITLGILSVVF. Topologically, residues 353–366 are extracellular; sequence GGATVVNGQPTLTG. Residues 367–387 traverse the membrane as a helical segment; that stretch reads AAGIIALVTANLYVFSFGFSW. At 388 to 412 the chain is on the cytoplasmic side; sequence GPIVWVLLGEMFNNKIRAAALSVAA. The helical transmembrane segment at 413–433 threads the bilayer; that stretch reads GVQWIANFIISTTFPPLLDTV. Residues 434-436 are Extracellular-facing; sequence GLG. Residues 437-457 traverse the membrane as a helical segment; sequence PAYGLYATSAAISIFFIWFFV. The Cytoplasmic portion of the chain corresponds to 458 to 468; it reads KETKGKTLEQM.

This sequence belongs to the major facilitator superfamily. Sugar transporter (TC 2.A.1.1) family.

The protein localises to the cell membrane. This Synechocystis sp. (strain ATCC 27184 / PCC 6803 / Kazusa) protein is Glucose transport protein (gtr).